A 461-amino-acid polypeptide reads, in one-letter code: ATP-dependent protease ATPase subunit HslU (461 aa).

ATP is bound by residues V21, G63–E68, D274, E339, and R411.

Belongs to the ClpX chaperone family. HslU subfamily. In terms of assembly, a double ring-shaped homohexamer of HslV is capped on each side by a ring-shaped HslU homohexamer. The assembly of the HslU/HslV complex is dependent on binding of ATP.

The protein resides in the cytoplasm. In terms of biological role, ATPase subunit of a proteasome-like degradation complex; this subunit has chaperone activity. The binding of ATP and its subsequent hydrolysis by HslU are essential for unfolding of protein substrates subsequently hydrolyzed by HslV. HslU recognizes the N-terminal part of its protein substrates and unfolds these before they are guided to HslV for hydrolysis. This Caldanaerobacter subterraneus subsp. tengcongensis (strain DSM 15242 / JCM 11007 / NBRC 100824 / MB4) (Thermoanaerobacter tengcongensis) protein is ATP-dependent protease ATPase subunit HslU.